The sequence spans 1410 residues: ABC transporter C family member 13 (1410 aa).

8 helical membrane passes run 23–43, 60–80, 88–108, 122–142, 148–168, 391–411, 474–494, and 505–525; these read IVLG…LTIT, LLYV…VLLV, VILC…ILSL, ILCF…NMIF, QEIC…VLRI, LSGL…SVLI, VFFW…LFAL, and FTCL…PWVI. The 276-residue stretch at 255–530 folds into the ABC transmembrane type-1 1 domain; that stretch reads CNNYSTPSLI…FPWVINGLID (276 aa). An ABC transporter 1 domain is found at 564–791; it reads VCVEDASCTW…ISPTFSLTNE (228 aa). 602–609 contacts ATP; that stretch reads GEVGSGKT. A run of 6 helical transmembrane segments spans residues 844-864, 889-909, 963-985, 990-1009, 1087-1107, and 1111-1131; these read AVFS…LMQG, TSFY…LTLV, SLPF…IVVL, VLFL…LQVF, IVLF…PISF, and GLVG…GSLL. In terms of domain architecture, ABC transmembrane type-1 2 spans 852–1139; the sequence is TIVILVSAVL…LLTSFTETEK (288 aa). In terms of domain architecture, ABC transporter 2 spans 1174–1407; it reads VEFHNVTMRY…DSSTFSSFVR (234 aa). ATP is bound at residue 1208–1215; the sequence is GRTGAGKS.

Belongs to the ABC transporter superfamily. ABCC family. Conjugate transporter (TC 3.A.1.208) subfamily. In terms of tissue distribution, ubiquitous.

The protein resides in the membrane. It catalyses the reaction ATP + H2O + xenobioticSide 1 = ADP + phosphate + xenobioticSide 2.. In terms of biological role, pump for glutathione S-conjugates. The polypeptide is ABC transporter C family member 13 (ABCC13) (Arabidopsis thaliana (Mouse-ear cress)).